The following is a 121-amino-acid chain: Large ribosomal subunit protein bL12 (121 aa).

The protein belongs to the bacterial ribosomal protein bL12 family. In terms of assembly, homodimer. Part of the ribosomal stalk of the 50S ribosomal subunit. Forms a multimeric L10(L12)X complex, where L10 forms an elongated spine to which 2 to 4 L12 dimers bind in a sequential fashion. Binds GTP-bound translation factors.

In terms of biological role, forms part of the ribosomal stalk which helps the ribosome interact with GTP-bound translation factors. Is thus essential for accurate translation. This Shewanella halifaxensis (strain HAW-EB4) protein is Large ribosomal subunit protein bL12.